Here is a 292-residue protein sequence, read N- to C-terminus: ATP synthase gamma chain (292 aa).

It belongs to the ATPase gamma chain family. As to quaternary structure, F-type ATPases have 2 components, CF(1) - the catalytic core - and CF(0) - the membrane proton channel. CF(1) has five subunits: alpha(3), beta(3), gamma(1), delta(1), epsilon(1). CF(0) has three main subunits: a, b and c.

It localises to the cell inner membrane. Functionally, produces ATP from ADP in the presence of a proton gradient across the membrane. The gamma chain is believed to be important in regulating ATPase activity and the flow of protons through the CF(0) complex. The polypeptide is ATP synthase gamma chain (Brucella abortus (strain S19)).